A 929-amino-acid chain; its full sequence is Thrombospondin-3b (929 aa).

A signal peptide spans 1-22 (MELRKIVPNLLVLYVAVHFSQS). Positions 24–192 (EIKVINVLEL…VESVKLALGG (169 aa)) constitute a Laminin G-like domain. The N-linked (GlcNAc...) asparagine glycan is linked to asparagine 45. 18 disulfides stabilise this stretch: cysteine 277–cysteine 288, cysteine 282–cysteine 299, cysteine 319–cysteine 343, cysteine 349–cysteine 362, cysteine 356–cysteine 371, cysteine 374–cysteine 386, cysteine 392–cysteine 406, cysteine 400–cysteine 416, cysteine 418–cysteine 429, cysteine 445–cysteine 452, cysteine 457–cysteine 477, cysteine 493–cysteine 513, cysteine 516–cysteine 536, cysteine 552–cysteine 572, cysteine 575–cysteine 595, cysteine 613–cysteine 633, cysteine 653–cysteine 673, and cysteine 689–cysteine 910. The EGF-like 1; calcium-binding domain occupies 345–384 (DIDECAELSGSCVPNSVCINTVGSFKCGQCKAGFVGNQTV). The N-linked (GlcNAc...) asparagine glycan is linked to asparagine 381. The EGF-like 2 domain maps to 388–430 (ARRTCETLGYSPCDVNSHCVMGRNSDVSCVCNVGWAGNGNICG). TSP type-3 repeat units lie at residues 431-465 (PDSD…NSGQ), 466-501 (EDTD…NKDQ), 502-524 (QNSD…NGDQ), 525-560 (LDTD…NPMQ), 561-583 (TDRD…DPLQ), 584-621 (SDMD…NSSQ), 622-661 (LDSD…NPSQ), and 662-697 (IDTD…EVTM). A compositionally biased stretch (basic and acidic residues) spans 602-613 (DGDGYQDTRDNC). Residues 602 to 651 (DGDGYQDTRDNCPEVPNSSQLDSDNDGIGDECDDDDDNDGIPDILPPGPD) form a disordered region. An N-linked (GlcNAc...) asparagine glycan is attached at asparagine 618. Positions 624 to 641 (SDNDGIGDECDDDDDNDG) are enriched in acidic residues. In terms of domain architecture, TSP C-terminal spans 701 to 915 (RAFQTVILDP…LGYRCNDSIP (215 aa)). Residue asparagine 911 is glycosylated (N-linked (GlcNAc...) asparagine).

It belongs to the thrombospondin family. As to quaternary structure, oligomer; disulfide-linked.

Functionally, adhesive glycoprotein that mediates cell-to-cell and cell-to-matrix interactions. Can bind to fibrinogen, fibronectin, laminin and type V collagen. The sequence is that of Thrombospondin-3b from Danio rerio (Zebrafish).